The following is a 490-amino-acid chain: AP-5 complex subunit mu-1 (490 aa).

One can recognise an MHD domain in the interval 206–476 (KAQISISITE…LISSDYYIWN (271 aa)).

It belongs to the adaptor complexes medium subunit family. In terms of assembly, probably part of the adaptor protein complex 5 (AP-5) a tetramer composed of AP5B1, AP5M1, AP5S1 and AP5Z1. As to expression, widely expressed, including in small intestine and testis. In small intestine, highly expressed in cytoplasm of villi epithelial cells and internal glands. In testis, selectively expressed in maturing sperm cells (at protein level).

The protein localises to the cytoplasm. Its subcellular location is the cytosol. It is found in the late endosome membrane. The protein resides in the lysosome membrane. As part of AP-5, a probable fifth adaptor protein complex it may be involved in endosomal transport. The protein is AP-5 complex subunit mu-1 (Ap5m1) of Mus musculus (Mouse).